A 212-amino-acid polypeptide reads, in one-letter code: Cytidylate kinase (212 aa).

Position 7–15 (7–15 (GPAASGKGT)) interacts with ATP.

It belongs to the cytidylate kinase family. Type 1 subfamily.

Its subcellular location is the cytoplasm. It catalyses the reaction CMP + ATP = CDP + ADP. It carries out the reaction dCMP + ATP = dCDP + ADP. The protein is Cytidylate kinase of Bradyrhizobium diazoefficiens (strain JCM 10833 / BCRC 13528 / IAM 13628 / NBRC 14792 / USDA 110).